The primary structure comprises 694 residues: Elongation factor G (694 aa).

Residues 8 to 283 (ERYRNIGIMA…AVIDYLPAPV (276 aa)) enclose the tr-type G domain. GTP contacts are provided by residues 17–24 (AHIDAGKT), 81–85 (DTPGH), and 135–138 (NKMD).

It belongs to the TRAFAC class translation factor GTPase superfamily. Classic translation factor GTPase family. EF-G/EF-2 subfamily.

The protein localises to the cytoplasm. Its function is as follows. Catalyzes the GTP-dependent ribosomal translocation step during translation elongation. During this step, the ribosome changes from the pre-translocational (PRE) to the post-translocational (POST) state as the newly formed A-site-bound peptidyl-tRNA and P-site-bound deacylated tRNA move to the P and E sites, respectively. Catalyzes the coordinated movement of the two tRNA molecules, the mRNA and conformational changes in the ribosome. The sequence is that of Elongation factor G from Paramagnetospirillum magneticum (strain ATCC 700264 / AMB-1) (Magnetospirillum magneticum).